The chain runs to 282 residues: Bifunctional protein FolD (282 aa).

NADP(+) is bound by residues 165-167 (GAS) and I231.

Belongs to the tetrahydrofolate dehydrogenase/cyclohydrolase family. In terms of assembly, homodimer.

The catalysed reaction is (6R)-5,10-methylene-5,6,7,8-tetrahydrofolate + NADP(+) = (6R)-5,10-methenyltetrahydrofolate + NADPH. The enzyme catalyses (6R)-5,10-methenyltetrahydrofolate + H2O = (6R)-10-formyltetrahydrofolate + H(+). It functions in the pathway one-carbon metabolism; tetrahydrofolate interconversion. In terms of biological role, catalyzes the oxidation of 5,10-methylenetetrahydrofolate to 5,10-methenyltetrahydrofolate and then the hydrolysis of 5,10-methenyltetrahydrofolate to 10-formyltetrahydrofolate. This Francisella tularensis subsp. mediasiatica (strain FSC147) protein is Bifunctional protein FolD.